The chain runs to 419 residues: Phospho-N-acetylmuramoyl-pentapeptide-transferase (419 aa).

Transmembrane regions (helical) follow at residues 22-42 (YVSF…TVIG), 72-92 (TPTM…LLLA), 99-119 (ILLM…DDYI), 135-155 (IIGQ…NPAV), 208-228 (VLFG…FISN), 238-258 (GLAT…AYVS), 278-298 (LTIF…YNAY), 303-323 (FMGD…ALII), 328-348 (LLPI…IQVF), and 396-416 (KITV…IATL).

This sequence belongs to the glycosyltransferase 4 family. MraY subfamily. Mg(2+) is required as a cofactor.

It localises to the cell inner membrane. It catalyses the reaction UDP-N-acetyl-alpha-D-muramoyl-L-alanyl-gamma-D-glutamyl-meso-2,6-diaminopimeloyl-D-alanyl-D-alanine + di-trans,octa-cis-undecaprenyl phosphate = di-trans,octa-cis-undecaprenyl diphospho-N-acetyl-alpha-D-muramoyl-L-alanyl-D-glutamyl-meso-2,6-diaminopimeloyl-D-alanyl-D-alanine + UMP. Its pathway is cell wall biogenesis; peptidoglycan biosynthesis. Functionally, catalyzes the initial step of the lipid cycle reactions in the biosynthesis of the cell wall peptidoglycan: transfers peptidoglycan precursor phospho-MurNAc-pentapeptide from UDP-MurNAc-pentapeptide onto the lipid carrier undecaprenyl phosphate, yielding undecaprenyl-pyrophosphoryl-MurNAc-pentapeptide, known as lipid I. The chain is Phospho-N-acetylmuramoyl-pentapeptide-transferase from Porphyromonas gingivalis (strain ATCC 33277 / DSM 20709 / CIP 103683 / JCM 12257 / NCTC 11834 / 2561).